We begin with the raw amino-acid sequence, 162 residues long: Beta-carotene hydroxylase (162 aa).

Residues 8-135 (VATVLVMELT…GRDHCVSFGF (128 aa)) form the Fatty acid hydroxylase domain.

Belongs to the sterol desaturase family.

The catalysed reaction is all-trans-beta-carotene + 4 reduced [2Fe-2S]-[ferredoxin] + 2 O2 + 4 H(+) = all-trans-zeaxanthin + 4 oxidized [2Fe-2S]-[ferredoxin] + 2 H2O. It functions in the pathway carotenoid biosynthesis; astaxanthin biosynthesis. Its function is as follows. Catalyzes the hydroxylation reaction from beta-carotene to zeaxanthin via beta-cryptoxanthin. The sequence is that of Beta-carotene hydroxylase (crtZ) from Paracoccus sp. (strain PC1) (Alcaligenes sp. (strain PC1)).